The primary structure comprises 470 residues: ATP synthase subunit beta (470 aa).

Residue 155-162 coordinates ATP; it reads GGAGVGKT.

Belongs to the ATPase alpha/beta chains family. In terms of assembly, F-type ATPases have 2 components, CF(1) - the catalytic core - and CF(0) - the membrane proton channel. CF(1) has five subunits: alpha(3), beta(3), gamma(1), delta(1), epsilon(1). CF(0) has three main subunits: a(1), b(2) and c(9-12). The alpha and beta chains form an alternating ring which encloses part of the gamma chain. CF(1) is attached to CF(0) by a central stalk formed by the gamma and epsilon chains, while a peripheral stalk is formed by the delta and b chains.

Its subcellular location is the cell membrane. The enzyme catalyses ATP + H2O + 4 H(+)(in) = ADP + phosphate + 5 H(+)(out). In terms of biological role, produces ATP from ADP in the presence of a proton gradient across the membrane. The catalytic sites are hosted primarily by the beta subunits. This chain is ATP synthase subunit beta, found in Lacticaseibacillus casei (Lactobacillus casei).